A 317-amino-acid chain; its full sequence is MTSRTRVTWPSPPRPLPVPAAAAVAFGAKGTDPAEARSSRGIEEAGPRAHGRAGREPERRRSRQQRRGGLQARRSTLLKTCARARATAPGAMKMVAPWTRFYSNSCCLCCHVRTGTILLGVWYLIINAVVLLILLSALADPDQYNFSSSELGGDFEFMDDANMCIAIAISLLMILICAMATYGAYKQRAAWIIPFFCYQIFDFALNMLVAITVLIYPNSIQEYIRQLPPNFPYRDDVMSVNPTCLVLIILLFISIILTFKGYLISCVWNCYRYINGRNSSDVLVYVTSNDTTVLLPPYDDATVNGAAKEPPPPYVSA.

Residues 25-73 are disordered; that stretch reads AFGAKGTDPAEARSSRGIEEAGPRAHGRAGREPERRRSRQQRRGGLQAR. Basic and acidic residues predominate over residues 32 to 59; that stretch reads DPAEARSSRGIEEAGPRAHGRAGREPER. 4 helical membrane-spanning segments follow: residues 117–137, 163–183, 191–211, and 244–264; these read ILLG…LLSA, MCIA…ATYG, WIIP…LVAI, and CLVL…GYLI. Residues 205–221 form a required for NEDD4 interaction region; sequence LNMLVAITVLIYPNSIQ.

Belongs to the LAPTM4/LAPTM5 transporter family. As to quaternary structure, homooligomer; upon reaching the lysosomes. Interacts with MCOLN1. Interacts with NEDD4; may play a role in the lysosomal sorting of LAPTM4B; enhances HGS association with NEDD4; mediates inhibition of EGFR degradation. Interacts with PIP5K1C; promotes SNX5 association with LAPTM4B; kinase activity of PIP5K1C is required; interaction is regulated by phosphatidylinositol 4,5-bisphosphate generated by PIP5K1C. Interacts with HGS; promotes HGS ubiquitination. Interacts with SNX5. Interacts with SLC3A2 and SLC7A5; recruits SLC3A2 and SLC7A5 to lysosomes to promote leucine uptake into these organelles and is required for mTORC1 activation. Interacts with LRRC32; decreases TGFB1 production in regulatory T cells. Interacts with BECN1; competes with EGFR for LAPTM4B binding; regulates EGFR activity. Interacts with EGFR; positively correlates with EGFR activation. Undergoes proteolytic cleavage following delivery to the lysosomes. In terms of processing, ubiquitinated by NEDD4.

Its subcellular location is the endomembrane system. The protein resides in the late endosome membrane. The protein localises to the cell membrane. It localises to the cell projection. It is found in the lysosome membrane. Its subcellular location is the endosome membrane. The protein resides in the endosome. The protein localises to the multivesicular body membrane. It localises to the multivesicular body lumen. Its function is as follows. Required for optimal lysosomal function. Blocks EGF-stimulated EGFR intraluminal sorting and degradation. Conversely by binding with the phosphatidylinositol 4,5-bisphosphate, regulates its PIP5K1C interaction, inhibits HGS ubiquitination and relieves LAPTM4B inhibition of EGFR degradation. Recruits SLC3A2 and SLC7A5 (the Leu transporter) to the lysosome, promoting entry of leucine and other essential amino acid (EAA) into the lysosome, stimulating activation of proton-transporting vacuolar (V)-ATPase protein pump (V-ATPase) and hence mTORC1 activation. Plays a role as negative regulator of TGFB1 production in regulatory T cells. Binds ceramide and facilitates its exit from late endosome in order to control cell death pathways. This chain is Lysosomal-associated transmembrane protein 4B, found in Homo sapiens (Human).